A 549-amino-acid chain; its full sequence is Chaperonin GroEL (549 aa).

Residues Thr30–Pro33, Lys51, Asp87–Thr91, Gly415, and Asp495 contribute to the ATP site.

It belongs to the chaperonin (HSP60) family. As to quaternary structure, forms a cylinder of 14 subunits composed of two heptameric rings stacked back-to-back. Interacts with the co-chaperonin GroES.

The protein resides in the cytoplasm. The enzyme catalyses ATP + H2O + a folded polypeptide = ADP + phosphate + an unfolded polypeptide.. Functionally, together with its co-chaperonin GroES, plays an essential role in assisting protein folding. The GroEL-GroES system forms a nano-cage that allows encapsulation of the non-native substrate proteins and provides a physical environment optimized to promote and accelerate protein folding. This Hahella chejuensis (strain KCTC 2396) protein is Chaperonin GroEL.